A 615-amino-acid polypeptide reads, in one-letter code: 3-(3-hydroxy-phenyl)propionate/3-hydroxycinnamic acid hydroxylase 1 (615 aa).

Residues 1–20 (MRPAFEPAAGLGRAHPHETT) are disordered. Residues 27–56 (DVAIIGAGPVGLMIANILGLQGVRVVVVEK) and 294–304 (FRVKRILLAGD) each bind FAD.

This sequence belongs to the PheA/TfdB FAD monooxygenase family. FAD is required as a cofactor.

It catalyses the reaction 3-(3-hydroxyphenyl)propanoate + NADH + O2 + H(+) = 3-(2,3-dihydroxyphenyl)propanoate + NAD(+) + H2O. The catalysed reaction is (2E)-3-(3-hydroxyphenyl)prop-2-enoate + NADH + O2 + H(+) = (2E)-3-(2,3-dihydroxyphenyl)prop-2-enoate + NAD(+) + H2O. It functions in the pathway aromatic compound metabolism; 3-phenylpropanoate degradation. Its function is as follows. Catalyzes the insertion of one atom of molecular oxygen into position 2 of the phenyl ring of 3-(3-hydroxyphenyl)propionate (3-HPP) and hydroxycinnamic acid (3HCI). The protein is 3-(3-hydroxy-phenyl)propionate/3-hydroxycinnamic acid hydroxylase 1 of Burkholderia vietnamiensis (strain G4 / LMG 22486) (Burkholderia cepacia (strain R1808)).